The sequence spans 258 residues: Type III pantothenate kinase (258 aa).

Residue 6 to 13 coordinates ATP; the sequence is DVGNTNTV. Substrate contacts are provided by residues Y100 and 107–110; that span reads GADR. The Proton acceptor role is filled by D109. D129 serves as a coordination point for K(+). T132 lines the ATP pocket. T184 lines the substrate pocket.

It belongs to the type III pantothenate kinase family. As to quaternary structure, homodimer. The cofactor is NH4(+). Requires K(+) as cofactor.

It localises to the cytoplasm. It carries out the reaction (R)-pantothenate + ATP = (R)-4'-phosphopantothenate + ADP + H(+). It participates in cofactor biosynthesis; coenzyme A biosynthesis; CoA from (R)-pantothenate: step 1/5. Catalyzes the phosphorylation of pantothenate (Pan), the first step in CoA biosynthesis. This chain is Type III pantothenate kinase, found in Geobacillus sp. (strain WCH70).